Here is a 99-residue protein sequence, read N- to C-terminus: UPF0235 protein Cag_0319 (99 aa).

Belongs to the UPF0235 family.

This chain is UPF0235 protein Cag_0319, found in Chlorobium chlorochromatii (strain CaD3).